Reading from the N-terminus, the 131-residue chain is Ribosome-binding factor A (131 aa).

Belongs to the RbfA family. As to quaternary structure, monomer. Binds 30S ribosomal subunits, but not 50S ribosomal subunits or 70S ribosomes.

The protein resides in the cytoplasm. In terms of biological role, one of several proteins that assist in the late maturation steps of the functional core of the 30S ribosomal subunit. Associates with free 30S ribosomal subunits (but not with 30S subunits that are part of 70S ribosomes or polysomes). Required for efficient processing of 16S rRNA. May interact with the 5'-terminal helix region of 16S rRNA. This is Ribosome-binding factor A from Thermotoga sp. (strain RQ2).